Consider the following 223-residue polypeptide: Adenylate kinase (223 aa).

ATP is bound at residue 10–15 (GSGKGT). Residues 30–59 (ESGAIFREHIGGGTELGMKAKGYIDKGELV) are NMP. Residues Ser31, Arg36, 57–59 (ELV), 84–87 (GFPR), and Gln91 each bind AMP. The LID stretch occupies residues 125 to 164 (GRRLCANDPNHPNNIFIDAIKPNGDKCRVCGGDLKTRSDD). Position 126 (Arg126) interacts with ATP. AMP contacts are provided by Arg161 and Arg173. An ATP-binding site is contributed by Gly209.

This sequence belongs to the adenylate kinase family. As to quaternary structure, monomer.

It localises to the cytoplasm. It catalyses the reaction AMP + ATP = 2 ADP. The protein operates within purine metabolism; AMP biosynthesis via salvage pathway; AMP from ADP: step 1/1. Its function is as follows. Catalyzes the reversible transfer of the terminal phosphate group between ATP and AMP. Plays an important role in cellular energy homeostasis and in adenine nucleotide metabolism. This is Adenylate kinase from Solidesulfovibrio magneticus (strain ATCC 700980 / DSM 13731 / RS-1) (Desulfovibrio magneticus).